The sequence spans 308 residues: Membrane protein insertase YidC 1 (308 aa).

The signal sequence occupies residues 1-22; that stretch reads MKSIKRFALSAMGVAMLLVLTG. The N-palmitoyl cysteine moiety is linked to residue C23. The S-diacylglycerol cysteine moiety is linked to residue C23. Transmembrane regions (helical) follow at residues 60-80, 135-155, 168-188, 211-226, and 232-252; these read FGVA…PLGI, FGGV…AIYF, YLGI…GVLY, MIYM…SLFS, and LYWV…NYIV. Residues 263 to 308 form a disordered region; that stretch reads ELAKNPPKASAFSKPSGRKDVTPEQPTAITSKKKHKNRNAGKQRSR. A compositionally biased stretch (basic residues) spans 293-308; it reads SKKKHKNRNAGKQRSR.

It belongs to the OXA1/ALB3/YidC family. Type 2 subfamily.

It is found in the cell membrane. Its function is as follows. Required for the insertion and/or proper folding and/or complex formation of integral membrane proteins into the membrane. Involved in integration of membrane proteins that insert both dependently and independently of the Sec translocase complex, as well as at least some lipoproteins. The polypeptide is Membrane protein insertase YidC 1 (Streptococcus pneumoniae serotype 4 (strain ATCC BAA-334 / TIGR4)).